Here is a 608-residue protein sequence, read N- to C-terminus: Protein transport protein SEC9 (608 aa).

2 disordered regions span residues 1–23 (MGFKKMFKKKDPTESEIRESMQD) and 50–307 (VTQK…QTAA). A compositionally biased stretch (basic and acidic residues) spans 9–21 (KKDPTESEIRESM). 2 stretches are compositionally biased toward low complexity: residues 54–67 (SSAAPPAARSNPYA) and 74–85 (SGGNPYAAAAAG). The span at 100-121 (NGGGGNGGSNSNGGSNSNGGSN) shows a compositional bias: gly residues. Residues 122–134 (GSPYKMNNGGNNA) are compositionally biased toward low complexity. Over residues 169 to 183 (SKKEEAPPPLEDPRL) the composition is skewed to basic and acidic residues. Positions 198–215 (ERDDYEPVYDVGLPEEPE) are enriched in acidic residues. Positions 241-260 (NVDRELEEDKTALFGPRDDP) are enriched in basic and acidic residues. Residues 390-452 (RFTKQQSAAS…KIAEDKAKEL (63 aa)) form the t-SNARE coiled-coil homology 1 domain. Residues 514 to 533 (GEKSKHRKEMMSKYGSRPGR) form a disordered region. The region spanning 545-607 (DILEDEIDNN…HLNTARLAGI (63 aa)) is the t-SNARE coiled-coil homology 2 domain.

Belongs to the SNAP-25 family.

The protein is Protein transport protein SEC9 (SEC9) of Yarrowia lipolytica (strain CLIB 122 / E 150) (Yeast).